A 1045-amino-acid chain; its full sequence is MDIS1-interacting receptor like kinase 2 (1045 aa).

The N-terminal stretch at 1–43 (MNKTNPERKISLTSFKERMACKEKPRDLQVLLIISIVLSCSFA) is a signal peptide. The Extracellular segment spans residues 44 to 709 (VSATVEEANA…SKKSHKDRNL (666 aa)). N-linked (GlcNAc...) asparagine glycosylation is found at Asn-63, Asn-77, Asn-99, and Asn-119. LRR repeat units lie at residues 92–116 (LGSI…PFSS), 117–140 (LPNL…LWGR), 141–165 (FSKL…LGDL), 166–189 (SNLD…IGRL), 191–212 (KVTE…SFGN), 213–237 (LTKL…IGNL), 238–260 (PNLR…SFGN), 262–285 (KNVT…IGNM), 286–309 (TALD…LGNI), 311–333 (TLAV…LGEM), 334–356 (ESMI…SFGK), 357–381 (LTAL…IANS), 383–405 (ELTV…ICRG), 406–429 (GKLE…LRDC), 431–452 (SLIR…AFGV), 453–476 (YPTL…NWEQ), 477–501 (SQKL…IWNM), 502–525 (TQLS…ISNI), 527–549 (RISK…IRLL), 550–573 (TNLE…LNNL), 575–597 (RLYY…LTKL), 598–620 (SQLQ…QFRS), 621–644 (LQNL…SFKD), and 646–670 (LALT…AFRN). N-linked (GlcNAc...) asparagine glycosylation is found at Asn-179 and Asn-212. 3 N-linked (GlcNAc...) asparagine glycosylation sites follow: Asn-249, Asn-263, and Asn-284. Asn-323 carries N-linked (GlcNAc...) asparagine glycosylation. Residues Asn-380, Asn-393, and Asn-410 are each glycosylated (N-linked (GlcNAc...) asparagine). 2 N-linked (GlcNAc...) asparagine glycosylation sites follow: Asn-487 and Asn-500. A glycan (N-linked (GlcNAc...) asparagine) is linked at Asn-580. A glycan (N-linked (GlcNAc...) asparagine) is linked at Asn-633. Asn-687 is a glycosylation site (N-linked (GlcNAc...) asparagine). A helical transmembrane segment spans residues 710–730 (IIYILVPIIGAIIILSVCAGI). Residues 731 to 1045 (FICFRKRTKQ…TMLSISTAFS (315 aa)) lie on the Cytoplasmic side of the membrane. Thr-772 is modified (phosphothreonine). Residues 775-1045 (FDPKYLIGTG…TMLSISTAFS (271 aa)) enclose the Protein kinase domain. Residues 781 to 789 (IGTGGHGKV) and Lys-802 each bind ATP. Residues Tyr-853 and Tyr-892 each carry the phosphotyrosine modification. The active-site Proton acceptor is the Asp-905. At Ser-938 the chain carries Phosphoserine. Phosphotyrosine is present on residues Tyr-946 and Tyr-953.

Belongs to the protein kinase superfamily. Ser/Thr protein kinase family. Interacts with MDIS1 and LURE1.2. Binds to SCOOP12; this interaction triggers the formation of complex between MIK2 and the BAK1/SERK3 and SERK4 coreceptors. As to expression, expressed in pollen tubes. Highly expressed in shoots, roots and leaves.

Its subcellular location is the cell membrane. It catalyses the reaction L-seryl-[protein] + ATP = O-phospho-L-seryl-[protein] + ADP + H(+). It carries out the reaction L-threonyl-[protein] + ATP = O-phospho-L-threonyl-[protein] + ADP + H(+). Acts as a receptor of SCOOP peptides from Brassicaceae plants regulating multiple processing including plant growth, development and stress responses. Perception of SCOOP peptides induces the association of MIK2 with the coreceptors BAK1/SERK3 and SERK4 and relays the signaling through the activation of receptor-like cytosolic kinases (RLCKs) BIK1 and PBL1. Also able to detect SCOOP-like proteins (SCOOPL) present in fungal Fusarium spp. and bacterial Comamonadaceae to elicit various immune responses, including growth inhibition, ROS production, calcium Ca(2+) influx, MAPK activation and MYB51 promoter activation in roots, thus being required for resistance to several root pathogens. Involved in the pollen tube perception of the female signal. Required to trigger defense responses toward generalist herbivores such as Spodoptera littoralis, probably via the activation of jasmonate and indole glucosinolate biosynthesis. This Arabidopsis thaliana (Mouse-ear cress) protein is MDIS1-interacting receptor like kinase 2.